The following is a 24-amino-acid chain: Humanin-like 3 (24 aa).

Belongs to the humanin family. As to expression, highly expressed in testis. Also expressed in kidney, heart, skeletal muscles and brain.

It is found in the secreted. The protein resides in the cytoplasm. Functionally, plays a role as a neuroprotective and antiapoptotic factor. This chain is Humanin-like 3, found in Homo sapiens (Human).